A 451-amino-acid polypeptide reads, in one-letter code: Uronate isomerase (451 aa).

The protein belongs to the metallo-dependent hydrolases superfamily. Uronate isomerase family.

The enzyme catalyses D-glucuronate = D-fructuronate. It carries out the reaction aldehydo-D-galacturonate = keto-D-tagaturonate. It participates in carbohydrate metabolism; pentose and glucuronate interconversion. This is Uronate isomerase from Thermotoga petrophila (strain ATCC BAA-488 / DSM 13995 / JCM 10881 / RKU-1).